Reading from the N-terminus, the 394-residue chain is S-adenosylmethionine synthase 1 (394 aa).

Glu11 lines the Mg(2+) pocket. His17 is a binding site for ATP. Glu45 is a K(+) binding site. Residues Glu58 and Gln101 each coordinate L-methionine. Residues 169-171 (DGK), 237-240 (SGRF), Asp248, 254-255 (RK), Ala271, Lys275, and Lys279 each bind ATP. Position 248 (Asp248) interacts with L-methionine. Residue Lys279 participates in L-methionine binding.

This sequence belongs to the AdoMet synthase family. In terms of assembly, homotetramer. Requires Mn(2+) as cofactor. It depends on Mg(2+) as a cofactor. The cofactor is Co(2+). K(+) is required as a cofactor.

The protein resides in the cytoplasm. It carries out the reaction L-methionine + ATP + H2O = S-adenosyl-L-methionine + phosphate + diphosphate. The protein operates within amino-acid biosynthesis; S-adenosyl-L-methionine biosynthesis; S-adenosyl-L-methionine from L-methionine: step 1/1. Functionally, catalyzes the formation of S-adenosylmethionine from methionine and ATP. The reaction comprises two steps that are both catalyzed by the same enzyme: formation of S-adenosylmethionine (AdoMet) and triphosphate, and subsequent hydrolysis of the triphosphate. This is S-adenosylmethionine synthase 1 (SAM1) from Hordeum vulgare (Barley).